Reading from the N-terminus, the 618-residue chain is Probable N-acetylgalactosaminyltransferase 6 (618 aa).

The Cytoplasmic portion of the chain corresponds to 1–16 (MIASLIRSRRRSRRCV). The helical; Signal-anchor for type II membrane protein transmembrane segment at 17–39 (VYSVFLFGFLALWGSFALALVFL) threads the bilayer. Residues 40-618 (SDMYIGEDQI…TEMSWLPEHP (579 aa)) are Lumenal-facing. N-linked (GlcNAc...) asparagine glycosylation is found at N81 and N149. Disulfide bonds link C147-C381 and C372-C452. The tract at residues 156–267 (LPTTSVIIVY…KGWLEPLLTR (112 aa)) is catalytic subdomain A. Residues D197 and R228 each contribute to the substrate site. D251 provides a ligand contact to Mn(2+). Position 252 (S252) interacts with substrate. Residue H253 coordinates Mn(2+). Positions 327-389 (PIESPTMAGG…PCSHVGHVFR (63 aa)) are catalytic subdomain B. W358 lines the substrate pocket. Residue H386 coordinates Mn(2+). Residue R389 participates in substrate binding. One can recognise a Ricin B-type lectin domain in the interval 474 to 609 (RFGRMTSSSN…SNDRQNWTIT (136 aa)). N483 carries an N-linked (GlcNAc...) asparagine glycan. 3 disulfide bridges follow: C487/C505, C530/C550, and C575/C597. N605 carries an N-linked (GlcNAc...) asparagine glycan.

This sequence belongs to the glycosyltransferase 2 family. GalNAc-T subfamily. Mn(2+) serves as cofactor.

It localises to the golgi apparatus membrane. The protein operates within protein modification; protein glycosylation. In terms of biological role, probable glycopeptide transferase involved in O-linked oligosaccharide biosynthesis. Glycopeptide transferases catalyze the transfer of an N-acetyl-D-galactosamine residue to an already glycosylated peptide. In contrast to other members of the family, it does not act as a peptide transferase that transfers GalNAc onto serine or threonine residue on peptides that have been tested. Some peptide transferase activity is however not excluded, considering that its appropriate peptide substrate may remain unidentified. This chain is Probable N-acetylgalactosaminyltransferase 6 (gly-6), found in Caenorhabditis elegans.